The chain runs to 398 residues: Cytohesin-1 (398 aa).

The residue at position 1 (Met1) is an N-acetylmethionine. A coiled-coil region spans residues 10 to 67; it reads SDLTAEERQELENIRRRKQELLADIQRLKDEIAEVANEIENLGSTEERKNMQRNKQVA. In terms of domain architecture, SEC7 spans 73 to 202; that stretch reads FNMDPKKGIQ…IIMLNTSLHN (130 aa). The region spanning 260 to 377 is the PH domain; that stretch reads NPDREGWLLK…WIKCIKAAIS (118 aa). Residues 269–277, Arg281, Tyr292, Arg302, and Asn351 contribute to the a 1,2-diacyl-sn-glycero-3-phospho-(1D-myo-inositol-3,4,5-trisphosphate) site; that span reads KLGGGRVKT. The C-terminal autoinhibitory region stretch occupies residues 388 to 396; sequence RKKKVSSTK.

As to quaternary structure, interacts with TRIM23 and CYTIP. Interacts (via coiled-coil domain) with FRMD4A (via coiled-coil domain). Interacts with FRMD4B. Found in a complex with PARD3, CYTH1 and FRMD4A. Interacts (via N-terminal domain) with INAVA (via N-terminal domain). Ubiquitinated by SCF(FBXW11) E3 ubiquitin-protein ligase complex. Ubiquitination induces proteasomal degradation.

It localises to the cell membrane. The protein resides in the cytoplasm. Its subcellular location is the cytosol. It is found in the cell junction. The protein localises to the tight junction. It localises to the adherens junction. Functionally, promotes guanine-nucleotide exchange on ARF1, ARF5 and ARF6. Promotes the activation of ARF factors through replacement of GDP with GTP. Plays an important role in membrane trafficking, during junctional remodeling and epithelial polarization, through regulation of ARF6 activity. The protein is Cytohesin-1 (CYTH1) of Chlorocebus aethiops (Green monkey).